The sequence spans 60 residues: Large ribosomal subunit protein uL30 (60 aa).

Belongs to the universal ribosomal protein uL30 family. Part of the 50S ribosomal subunit.

This Dehalococcoides mccartyi (strain CBDB1) protein is Large ribosomal subunit protein uL30.